Reading from the N-terminus, the 709-residue chain is Leucine-rich repeat-containing protein 4B (709 aa).

An N-terminal signal peptide occupies residues 1–38; it reads MAQAHIQGSPCPLLPPGRMSWPQGALLLLWLFSPPLRA. In terms of domain architecture, LRRNT spans 50-88; sequence GGGSPPATSCPAACSCSNQASRVICTRRELAEVPASIPV. 9 LRR repeats span residues 89 to 110, 113 to 134, 137 to 158, 161 to 182, 185 to 207, 210 to 231, 232 to 253, 256 to 277, and 280 to 301; these read NTRY…TFKH, HLEI…AFNG, SLNT…AFEY, KLRE…AFNR, SLRR…AFEG, NLRY…TALV, RLEE…SFQG, SLRK…AFDD, and SLEE…LFTP. One can recognise an LRRCT domain in the interval 313-365; sequence NPWHCNCDVLWLSWWLKETVPSNTTCCARCHAPAGLKGRYIGELDQSHFTCYA. In terms of domain architecture, Ig-like C2-type spans 366-454; the sequence is PVIVEPPTDL…GNTTASATLN (89 aa). Asn376, Asn402, Asn424, Asn427, and Asn446 each carry an N-linked (GlcNAc...) asparagine glycan. Cys387 and Cys438 are joined by a disulfide. The segment at 496 to 552 is disordered; sequence TQPGEEAQQPRGTEKEPPGPTTDGAWGGGRPDAAAPASASTTAPAPRSSRPTEKAFT. Low complexity predominate over residues 528 to 544; sequence AAAPASASTTAPAPRSS. Residues 575–595 form a helical membrane-spanning segment; sequence IIIGCFVAITFMAAVMLVAFY. Residue Ser689 is modified to Phosphoserine.

Interacts with PTPRF. Interacts with DLG4. Post-translationally, N-glycosylated. O-glycosylated; contains sialic acid. As to expression, mainly expressed in the brain. Widespread distribution in various brain regions (at protein level). Detected both embryonically and postnatally with stronger expression in postnatal stages.

It localises to the membrane. The protein localises to the presynaptic cell membrane. Synaptic adhesion protein. Regulates the formation of excitatory synapses. The trans-synaptic adhesion between LRRC4B and PTPRF regulates the formation of excitatory synapses in a bidirectional manner. In Rattus norvegicus (Rat), this protein is Leucine-rich repeat-containing protein 4B (Lrrc4b).